The chain runs to 312 residues: Ribosomal RNA small subunit methyltransferase H (312 aa).

S-adenosyl-L-methionine-binding positions include 35 to 37 (GGH), Asp-55, Phe-85, Asp-101, and Gln-108.

It belongs to the methyltransferase superfamily. RsmH family.

It localises to the cytoplasm. The catalysed reaction is cytidine(1402) in 16S rRNA + S-adenosyl-L-methionine = N(4)-methylcytidine(1402) in 16S rRNA + S-adenosyl-L-homocysteine + H(+). Functionally, specifically methylates the N4 position of cytidine in position 1402 (C1402) of 16S rRNA. This chain is Ribosomal RNA small subunit methyltransferase H, found in Buchnera aphidicola subsp. Acyrthosiphon pisum (strain Tuc7).